Consider the following 372-residue polypeptide: Serine protease inhibitor 42Dd (372 aa).

Residues 1–15 form the signal peptide; it reads MYYLCIFLWVTSVAC. N197 and N232 each carry an N-linked (GlcNAc...) asparagine glycan.

This sequence belongs to the serpin family. As to expression, expressed in the ovary.

It is found in the secreted. Serine protease inhibitor with activity toward trypsin. Involved in innate immunity to fungal infection by negatively regulating the Toll signaling pathway and suppressing the expression of the antifungal peptide drosomycin. Acts upstream of SPE and grass, and downstream of the fungal cell wall pattern recognition receptor GNBP3. May function specifically in the GNBP3-dependent beta-1,3-glucan branch of the Toll pathway. This chain is Serine protease inhibitor 42Dd, found in Drosophila melanogaster (Fruit fly).